The chain runs to 154 residues: Probable ubiquitin-conjugating enzyme E2 31 (154 aa).

The region spanning Lys-8–Asn-153 is the UBC core domain. Cys-91 (glycyl thioester intermediate) is an active-site residue.

It belongs to the ubiquitin-conjugating enzyme family.

It catalyses the reaction S-ubiquitinyl-[E1 ubiquitin-activating enzyme]-L-cysteine + [E2 ubiquitin-conjugating enzyme]-L-cysteine = [E1 ubiquitin-activating enzyme]-L-cysteine + S-ubiquitinyl-[E2 ubiquitin-conjugating enzyme]-L-cysteine.. Its pathway is protein modification; protein ubiquitination. In terms of biological role, accepts the ubiquitin from the E1 complex and catalyzes its covalent attachment to other proteins. The protein is Probable ubiquitin-conjugating enzyme E2 31 (UBC31) of Arabidopsis thaliana (Mouse-ear cress).